The chain runs to 551 residues: Glucans biosynthesis protein D (551 aa).

The segment at residues 1–32 (MDRRRFIKGSMAMAAVCGTSGIASLFSQAAFA) is a signal peptide (tat-type signal).

The protein belongs to the OpgD/OpgG family. In terms of processing, predicted to be exported by the Tat system. The position of the signal peptide cleavage has not been experimentally proven.

The protein localises to the periplasm. It participates in glycan metabolism; osmoregulated periplasmic glucan (OPG) biosynthesis. Its function is as follows. Probably involved in the control of the structural glucose backbone of osmoregulated periplasmic glucans (OPGs). This chain is Glucans biosynthesis protein D, found in Escherichia coli O139:H28 (strain E24377A / ETEC).